Reading from the N-terminus, the 347-residue chain is MNPLVTLIIYITLISGTIITMTSSHWLTVWMGLEMNMFAIIPLIMKTHTPRAIEATTKYFLIQASASMLLLMAATINFMEFGQWTVIDMPSPIASTIILAAIMMKLGMAPFHFWVPEVTQGTLLSTSLIILTWQKLAPLSILYQIYPSMNPKIILASAMLSIMIGGWGGLNQTQLRKIMAYSSIAHMGWMSAILIYNPSLMLLNLTLYIIFTITMFTILIHCMATSNKTLSMMWNNTPILMMTLLLTLLSMGGLPPLSGFVPKWLIINEMITNNNITISLTMAMLALLNLYFYMRLIYSSSLTLFPSSNNMKFKWKMNNTPKLPFLPTLTIISILMLPITPMMFIFE.

Transmembrane regions (helical) follow at residues 1-21 (MNPLVTLIIYITLISGTIITM), 25-45 (HWLTVWMGLEMNMFAIIPLIM), 59-79 (YFLIQASASMLLLMAATINFM), 96-116 (TIILAAIMMKLGMAPFHFWVP), 123-143 (LLSTSLIILTWQKLAPLSILY), 153-173 (IILASAMLSIMIGGWGGLNQT), 178-198 (IMAYSSIAHMGWMSAILIYNP), 200-220 (LMLLNLTLYIIFTITMFTILI), 239-259 (ILMMTLLLTLLSMGGLPPLSG), 278-298 (ISLTMAMLALLNLYFYMRLIY), and 325-345 (FLPTLTIISILMLPITPMMFI).

The protein belongs to the complex I subunit 2 family. Core subunit of respiratory chain NADH dehydrogenase (Complex I) which is composed of 45 different subunits. Interacts with TMEM242.

It is found in the mitochondrion inner membrane. The enzyme catalyses a ubiquinone + NADH + 5 H(+)(in) = a ubiquinol + NAD(+) + 4 H(+)(out). Core subunit of the mitochondrial membrane respiratory chain NADH dehydrogenase (Complex I) that is believed to belong to the minimal assembly required for catalysis. Complex I functions in the transfer of electrons from NADH to the respiratory chain. The immediate electron acceptor for the enzyme is believed to be ubiquinone. This Oryzorictes hova (Hova rice tenrec) protein is NADH-ubiquinone oxidoreductase chain 2.